The following is a 1108-amino-acid chain: TBC1 domain family member 8B (1108 aa).

2 consecutive GRAM domains span residues 143–210 (LRFE…ERTS) and 283–351 (QSFR…ELPD). The Rab-GAP TBC domain occupies 469-656 (GVPETLRGEL…NVVDCFFYDG (188 aa)). Residues 822–857 (HSRSLARSAFHLLDENGDGLVNFKEFICGLDILYNR) form the EF-hand domain. D835, N837, D839, and E846 together coordinate Ca(2+). The tract at residues 961-1059 (GRKLQDSSPQ…PTDTPSSPCT (99 aa)) is disordered. The span at 967–998 (SSPQKTPQTTPTSTSQPESSPTKPTSPESETP) shows a compositional bias: low complexity. Over residues 1010–1024 (SPVSQHETAPSHSDI) the composition is skewed to polar residues. Residues 1025–1057 (TPNSTSHPSTPTSSPTETSSPVLDTPTDTPSSP) show a composition bias toward low complexity.

The protein resides in the cytoplasm. It localises to the cytosol. Its function is as follows. Involved in vesicular recycling, probably as a GTPase-activating protein for Rab family protein(s). This Danio rerio (Zebrafish) protein is TBC1 domain family member 8B (tbc1d8b).